Reading from the N-terminus, the 73-residue chain is uncharacterized protein (73 aa).

It belongs to the asfivirus DP63R family.

This is an uncharacterized protein from Ornithodoros (relapsing fever ticks).